Reading from the N-terminus, the 198-residue chain is Phosphoheptose isomerase (198 aa).

The region spanning 36-198 (MIGSLLNNGK…DCLLLGVEDQ (163 aa)) is the SIS domain. 51-53 (NGG) lines the substrate pocket. Zn(2+) contacts are provided by histidine 60 and glutamate 64. Substrate-binding positions include glutamate 64, 93 to 94 (ND), 119 to 121 (STS), serine 124, and glutamine 174. 2 residues coordinate Zn(2+): glutamine 174 and histidine 182.

The protein belongs to the SIS family. GmhA subfamily. Homotetramer. It depends on Zn(2+) as a cofactor.

It localises to the cytoplasm. The catalysed reaction is 2 D-sedoheptulose 7-phosphate = D-glycero-alpha-D-manno-heptose 7-phosphate + D-glycero-beta-D-manno-heptose 7-phosphate. It participates in carbohydrate biosynthesis; D-glycero-D-manno-heptose 7-phosphate biosynthesis; D-glycero-alpha-D-manno-heptose 7-phosphate and D-glycero-beta-D-manno-heptose 7-phosphate from sedoheptulose 7-phosphate: step 1/1. Functionally, catalyzes the isomerization of sedoheptulose 7-phosphate in D-glycero-D-manno-heptose 7-phosphate. This chain is Phosphoheptose isomerase, found in Aromatoleum aromaticum (strain DSM 19018 / LMG 30748 / EbN1) (Azoarcus sp. (strain EbN1)).